A 602-amino-acid polypeptide reads, in one-letter code: MTDISVSKIRNFCIIAHIDHGKSTLADRLLQDTGTVQQRDMQEQFLDSMDLERERGITIKLQAARMKYKADDSQEYVLNLIDTPGHVDFSYEVSRSLQACEGALLVVDASQGVEAQTLANVYLALENNLEIIPVLNKVDLPGADAEKIKQEIEEIIGLDTSNAINCSAKTGVGIKDILEAIVRRVPPPQDEIKLPTKALIFDSYYDPYRGVIVYFRVISGSLNKREKILLMASKKNYELDEIGIMAPDQQQVDELHAGEVGYLAASIKSVADARVGDTITLLNSPANEPLPGYKTANPMVFCGLFPTDADQFPDLRVSLEKLQLSDAALKYEPETSSAMGFGFRCGFLGLLHMEIVQERLEREYDLDLIVTAPSVIYKVNLNQQENIFIDNPSTIPDPQLRESIEEPYVKMEIYAPNEFNGTLMGLCQERRGVFIDMKYITTDRVTLIYEIPLAEVVTDFFDQMKSRTQGYASMEYHLIGYRKNDLVRLDVLINSERADPLTSIVHKDKAYGIGRSLVEKLKELIPKQQFKIPIQASIGSRIIASESISALRKDVLSKCYGGDISRKKKLLKKQAKGKKRMKAMGKVEVPQEAFMAVLKLNQ.

Residues 7–189 (SKIRNFCIIA…AIVRRVPPPQ (183 aa)) enclose the tr-type G domain. Residues 19–24 (DHGKST) and 136–139 (NKVD) contribute to the GTP site.

This sequence belongs to the TRAFAC class translation factor GTPase superfamily. Classic translation factor GTPase family. LepA subfamily.

Its subcellular location is the cell inner membrane. The enzyme catalyses GTP + H2O = GDP + phosphate + H(+). Its function is as follows. Required for accurate and efficient protein synthesis under certain stress conditions. May act as a fidelity factor of the translation reaction, by catalyzing a one-codon backward translocation of tRNAs on improperly translocated ribosomes. Back-translocation proceeds from a post-translocation (POST) complex to a pre-translocation (PRE) complex, thus giving elongation factor G a second chance to translocate the tRNAs correctly. Binds to ribosomes in a GTP-dependent manner. This Prochlorococcus marinus (strain MIT 9215) protein is Elongation factor 4.